Here is a 211-residue protein sequence, read N- to C-terminus: Probable superoxide dismutase [Mn], mitochondrial (211 aa).

Positions 36, 84, 173, and 177 each coordinate Mn(2+).

This sequence belongs to the iron/manganese superoxide dismutase family. In terms of assembly, homotetramer. It depends on Mn(2+) as a cofactor.

The protein localises to the mitochondrion matrix. It catalyses the reaction 2 superoxide + 2 H(+) = H2O2 + O2. Its function is as follows. Destroys superoxide anion radicals which are normally produced within the cells and which are toxic to biological systems. In Debaryomyces hansenii (strain ATCC 36239 / CBS 767 / BCRC 21394 / JCM 1990 / NBRC 0083 / IGC 2968) (Yeast), this protein is Probable superoxide dismutase [Mn], mitochondrial.